The following is a 522-amino-acid chain: Transactivator/viroplasmin protein (522 aa).

Positions 487 to 500 are enriched in basic and acidic residues; the sequence is KDASTDRGTTDKDG. The disordered stretch occupies residues 487–522; it reads KDASTDRGTTDKDGPPPTRSIVEKEDVPTTSSKQVD.

This sequence belongs to the caulimoviridae viroplasmin family.

Its subcellular location is the host cytoplasm. In terms of biological role, enhances the ribosomal termination-reinitiation event leading to the translation of major open reading frames on the polycistronic viral RNAs. The protein is Transactivator/viroplasmin protein of Arabidopsis thaliana (Mouse-ear cress).